An 83-amino-acid polypeptide reads, in one-letter code: uncharacterized protein (83 aa).

This is an uncharacterized protein from Thermoproteus tenax (TTV1).